A 445-amino-acid polypeptide reads, in one-letter code: Glutamyl-tRNA(Gln) amidotransferase subunit D (445 aa).

The Asparaginase/glutaminase domain occupies 93 to 425 (SEIKIISTGG…EKIRSLMISN (333 aa)). Catalysis depends on residues Thr103, Thr179, Asp180, and Lys258.

The protein belongs to the asparaginase 1 family. GatD subfamily. In terms of assembly, heterodimer of GatD and GatE.

It carries out the reaction L-glutamyl-tRNA(Gln) + L-glutamine + ATP + H2O = L-glutaminyl-tRNA(Gln) + L-glutamate + ADP + phosphate + H(+). Functionally, allows the formation of correctly charged Gln-tRNA(Gln) through the transamidation of misacylated Glu-tRNA(Gln) in organisms which lack glutaminyl-tRNA synthetase. The reaction takes place in the presence of glutamine and ATP through an activated gamma-phospho-Glu-tRNA(Gln). The GatDE system is specific for glutamate and does not act on aspartate. The sequence is that of Glutamyl-tRNA(Gln) amidotransferase subunit D from Saccharolobus islandicus (strain L.S.2.15 / Lassen #1) (Sulfolobus islandicus).